The chain runs to 370 residues: Alanine racemase (370 aa).

Catalysis depends on Lys-39, which acts as the Proton acceptor; specific for D-alanine. Lys-39 bears the N6-(pyridoxal phosphate)lysine mark. Arg-137 is a substrate binding site. Tyr-258 serves as the catalytic Proton acceptor; specific for L-alanine. Position 306 (Met-306) interacts with substrate.

The protein belongs to the alanine racemase family. The cofactor is pyridoxal 5'-phosphate.

It carries out the reaction L-alanine = D-alanine. It participates in amino-acid biosynthesis; D-alanine biosynthesis; D-alanine from L-alanine: step 1/1. Catalyzes the interconversion of L-alanine and D-alanine. May also act on other amino acids. The polypeptide is Alanine racemase (alr) (Methylobacterium nodulans (strain LMG 21967 / CNCM I-2342 / ORS 2060)).